The following is a 3268-amino-acid chain: E3 ubiquitin-protein ligase TOM1 (3268 aa).

S1890 carries the phosphoserine modification. Disordered regions lie at residues 1941-2023 (VFSD…EDDA) and 2038-2083 (GYDV…MGDS). A compositionally biased stretch (acidic residues) spans 1942-1955 (FSDEDDDMGEEDAD). Over residues 1967–1976 (SSEMQSSTAD) the composition is skewed to polar residues. Acidic residues-rich tracts occupy residues 1978-1988 (TDVDYEVDDAD), 2042-2053 (DLSDYDVDESDW), and 2063-2074 (SDEDSESSEDEP). T2096 is subject to Phosphothreonine. S2119, S2376, S2406, and S2418 each carry phosphoserine. The span at 2416 to 2426 (DVSNNDEEVEN) shows a compositional bias: acidic residues. A disordered region spans residues 2416–2443 (DVSNNDEEVENGLDHGNSNDRNNADPEK). The region spanning 2932 to 3268 (TNDEIKNSKL…NEGHEGFGLA (337 aa)) is the HECT domain. The active-site Glycyl thioester intermediate is the C3235.

The protein belongs to the UPL family. TOM1/PTR1 subfamily. Interacts with the ADA3/NGG1 subunit of the SAGA complex. Interacts with KRR1.

It is found in the nucleus. The protein resides in the nucleolus. It catalyses the reaction S-ubiquitinyl-[E2 ubiquitin-conjugating enzyme]-L-cysteine + [acceptor protein]-L-lysine = [E2 ubiquitin-conjugating enzyme]-L-cysteine + N(6)-ubiquitinyl-[acceptor protein]-L-lysine.. It participates in protein modification; protein ubiquitination. In terms of biological role, probable ubiquitin ligase protein involved in many cellular processes, such as transcription regulation, maintenance of nuclear structure, cell cycle, mRNA export and rRNA maturation. E3 ubiquitin ligase proteins mediate ubiquitination and subsequent proteasomal degradation of target proteins. Involved in transcription regulation by interacting, and probably mediating, ubiquitination of some subunit of the SAGA complex. Required for SPT7 ubiquitination. Participates in mRNA export from the nucleus by regulating the transport of hnRNP proteins. Required for the shuttling of hnRNP protein NAB2, probably by mediating ubiquitination of a protein associated with NAB2. Also required for full induction of the general stress and heat-shock responses. Involved in 18S rRNA maturation by affecting several early steps in the rRNA processing pathway. The chain is E3 ubiquitin-protein ligase TOM1 (TOM1) from Saccharomyces cerevisiae (strain ATCC 204508 / S288c) (Baker's yeast).